A 469-amino-acid polypeptide reads, in one-letter code: Cysteine protease ATG4 (469 aa).

The segment at 48–99 is disordered; the sequence is KNIKADDHHPQTPPSVLKAETETQEAHDTAQPPNPPTNAPDTPPDSISSSFS. Basic and acidic residues predominate over residues 66–75; sequence AETETQEAHD. The segment covering 79-90 has biased composition (pro residues); the sequence is PPNPPTNAPDTP. Residue C172 is the Nucleophile of the active site. Residues D362 and H364 contribute to the active site. Residues 443–469 are disordered; that stretch reads GSSEGRESAIDEVETLSDDDTDTIHEA. Residues 452-463 show a composition bias toward acidic residues; the sequence is IDEVETLSDDDT.

The protein belongs to the peptidase C54 family. Interacts with ATG8.

The protein localises to the cytoplasm. Its subcellular location is the nucleus. It localises to the preautophagosomal structure. The catalysed reaction is [protein]-C-terminal L-amino acid-glycyl-phosphatidylethanolamide + H2O = [protein]-C-terminal L-amino acid-glycine + a 1,2-diacyl-sn-glycero-3-phosphoethanolamine. Cysteine protease that plays a key role in cytoplasm to vacuole transport (Cvt) and autophagy by mediating both proteolytic activation and delipidation of ATG8. Required for selective autophagic degradation of the nucleus (nucleophagy) as well as for mitophagy which contributes to regulate mitochondrial quantity and quality by eliminating the mitochondria to a basal level to fulfill cellular energy requirements and preventing excess ROS production. The protease activity is required for proteolytic activation of ATG8: cleaves the C-terminal amino acid of ATG8 to reveal a C-terminal glycine. ATG8 ubiquitin-like activity requires the exposure of the glycine at the C-terminus for its conjugation to phosphatidylethanolamine (PE) and its insertion to membranes, which is necessary for autophagy. The ATG8-PE conjugate mediates tethering between adjacent membranes and stimulates membrane hemifusion, leading to expansion of the autophagosomal membrane during autophagy. In addition to the protease activity, also catalyzes deconjugation of PE-conjugated forms of ATG8 during macroautophagy: ATG8 delipidation is required to release the protein from membranes, which facilitates multiple events during macroautophagy, and especially for efficient autophagosome biogenesis, the assembly of ATG9-containing tubulovesicular clusters into phagophores/autophagosomes, and for the disassembly of PAS-associated ATG components. ATG8 delipidation by ATG4 also recycles ATG8-PE generated on inappropriate membranes to maintain a reservoir of unlipidated ATG8 that is required for autophagosome formation at the PAS. Autophagy is required for proper vegetative growth, asexual/sexual reproduction, and full virulence. Autophagy is particularly involved in the biosynthesis of deoxynivalenol (DON), an important virulence determinant. The protein is Cysteine protease ATG4 of Gibberella zeae (strain ATCC MYA-4620 / CBS 123657 / FGSC 9075 / NRRL 31084 / PH-1) (Wheat head blight fungus).